A 434-amino-acid polypeptide reads, in one-letter code: Glutamate-1-semialdehyde 2,1-aminomutase 1 (434 aa).

Position 270 is an N6-(pyridoxal phosphate)lysine (Lys-270).

It belongs to the class-III pyridoxal-phosphate-dependent aminotransferase family. HemL subfamily. Homodimer. It depends on pyridoxal 5'-phosphate as a cofactor.

The protein resides in the cytoplasm. It catalyses the reaction (S)-4-amino-5-oxopentanoate = 5-aminolevulinate. It participates in porphyrin-containing compound metabolism; protoporphyrin-IX biosynthesis; 5-aminolevulinate from L-glutamyl-tRNA(Glu): step 2/2. This Bacillus anthracis (strain A0248) protein is Glutamate-1-semialdehyde 2,1-aminomutase 1.